We begin with the raw amino-acid sequence, 194 residues long: uncharacterized protein (194 aa).

Disordered stretches follow at residues Met1–Glu72 and Val113–Val194. Residues Ala26 to Ala39 show a composition bias toward basic and acidic residues. The segment covering Gly146–Arg171 has biased composition (polar residues).

This is an uncharacterized protein from Homo sapiens (Human).